The primary structure comprises 321 residues: Glucokinase (321 aa).

ATP is bound at residue 8 to 13; the sequence is GDVGGT.

The protein belongs to the bacterial glucokinase family.

The protein localises to the cytoplasm. The catalysed reaction is D-glucose + ATP = D-glucose 6-phosphate + ADP + H(+). This is Glucokinase from Salmonella typhi.